We begin with the raw amino-acid sequence, 190 residues long: ATP synthase subunit delta (190 aa).

The protein belongs to the ATPase delta chain family. F-type ATPases have 2 components, F(1) - the catalytic core - and F(0) - the membrane proton channel. F(1) has five subunits: alpha(3), beta(3), gamma(1), delta(1), epsilon(1). F(0) has three main subunits: a(1), b(2) and c(10-14). The alpha and beta chains form an alternating ring which encloses part of the gamma chain. F(1) is attached to F(0) by a central stalk formed by the gamma and epsilon chains, while a peripheral stalk is formed by the delta and b chains.

Its subcellular location is the cell inner membrane. Functionally, f(1)F(0) ATP synthase produces ATP from ADP in the presence of a proton or sodium gradient. F-type ATPases consist of two structural domains, F(1) containing the extramembraneous catalytic core and F(0) containing the membrane proton channel, linked together by a central stalk and a peripheral stalk. During catalysis, ATP synthesis in the catalytic domain of F(1) is coupled via a rotary mechanism of the central stalk subunits to proton translocation. In terms of biological role, this protein is part of the stalk that links CF(0) to CF(1). It either transmits conformational changes from CF(0) to CF(1) or is implicated in proton conduction. The chain is ATP synthase subunit delta from Methylobacterium radiotolerans (strain ATCC 27329 / DSM 1819 / JCM 2831 / NBRC 15690 / NCIMB 10815 / 0-1).